The following is a 156-amino-acid chain: Small ribosomal subunit protein uS7 (156 aa).

This sequence belongs to the universal ribosomal protein uS7 family. In terms of assembly, part of the 30S ribosomal subunit. Contacts proteins S9 and S11.

In terms of biological role, one of the primary rRNA binding proteins, it binds directly to 16S rRNA where it nucleates assembly of the head domain of the 30S subunit. Is located at the subunit interface close to the decoding center, probably blocks exit of the E-site tRNA. This chain is Small ribosomal subunit protein uS7, found in Anaeromyxobacter sp. (strain Fw109-5).